The sequence spans 503 residues: Lycopene beta cyclase, chloroplastic/chromoplastic (503 aa).

Residues 1-85 (MDTLLRTHNR…DLPLYDPSKA (85 aa)) constitute a chloroplast and chromoplast transit peptide. 90–117 (LAVVGGGPLARSCSTSLGGGLSVVSIDP) contributes to the NAD(+) binding site.

This sequence belongs to the lycopene cyclase family.

Its subcellular location is the plastid. It is found in the chloroplast. The protein localises to the chromoplast. The protein resides in the chromoplast membrane. It localises to the chloroplast membrane. The catalysed reaction is a carotenoid psi-end group = a carotenoid beta-end derivative. It functions in the pathway carotenoid biosynthesis; beta-carotene biosynthesis. The protein operates within carotenoid biosynthesis; beta-zeacarotene biosynthesis. Its function is as follows. Catalyzes the double cyclization reaction which converts lycopene to beta-carotene and neurosporene to beta-zeacarotene. This Narcissus pseudonarcissus (Daffodil) protein is Lycopene beta cyclase, chloroplastic/chromoplastic (LCY1).